The sequence spans 310 residues: UDP-N-acetylenolpyruvoylglucosamine reductase (310 aa).

The FAD-binding PCMH-type domain occupies 34–213 (RAGGNAEVLF…LRRMNEITSS (180 aa)). Residue arginine 178 is part of the active site. Serine 227 serves as the catalytic Proton donor. The active site involves glutamate 297.

This sequence belongs to the MurB family. Requires FAD as cofactor.

The protein resides in the cytoplasm. It carries out the reaction UDP-N-acetyl-alpha-D-muramate + NADP(+) = UDP-N-acetyl-3-O-(1-carboxyvinyl)-alpha-D-glucosamine + NADPH + H(+). It functions in the pathway cell wall biogenesis; peptidoglycan biosynthesis. Its function is as follows. Cell wall formation. The protein is UDP-N-acetylenolpyruvoylglucosamine reductase of Parvibaculum lavamentivorans (strain DS-1 / DSM 13023 / NCIMB 13966).